The primary structure comprises 210 residues: Fibroblast growth factor 8 (210 aa).

The N-terminal stretch at 1–27 (MRLIPSRLSYLFLHLFAFCYYAQVTIQ) is a signal peptide.

It belongs to the heparin-binding growth factors family. As to quaternary structure, monomer. Homodimer.

It localises to the secreted. Functionally, plays an important role in the regulation of embryonic development, cell proliferation, cell differentiation and cell migration. Required for Kupffer's vesicle ciliogenesis. In Danio rerio (Zebrafish), this protein is Fibroblast growth factor 8.